A 460-amino-acid polypeptide reads, in one-letter code: Bifunctional protein GlmU (460 aa).

Residues 1-230 (MSNNYAIILA…FDESLGVNDR (230 aa)) form a pyrophosphorylase region. Residues 9–12 (LAAG), Lys-23, Gln-73, and 78–79 (GT) each bind UDP-N-acetyl-alpha-D-glucosamine. Asp-103 serves as a coordination point for Mg(2+). The UDP-N-acetyl-alpha-D-glucosamine site is built by Gly-140, Glu-155, Asn-170, and Asn-228. Asn-228 contacts Mg(2+). The linker stretch occupies residues 231-251 (VALATAEAVMRKRINEKHMVN). The interval 252-460 (GVTFINPDAT…TRFPFHPSQK (209 aa)) is N-acetyltransferase. 2 residues coordinate UDP-N-acetyl-alpha-D-glucosamine: Arg-333 and Lys-351. The active-site Proton acceptor is His-363. 2 residues coordinate UDP-N-acetyl-alpha-D-glucosamine: Tyr-366 and Asn-377. Residues Ala-380, 386 to 387 (NY), Ser-405, Ala-423, and Arg-440 each bind acetyl-CoA.

The protein in the N-terminal section; belongs to the N-acetylglucosamine-1-phosphate uridyltransferase family. It in the C-terminal section; belongs to the transferase hexapeptide repeat family. As to quaternary structure, homotrimer. It depends on Mg(2+) as a cofactor.

The protein resides in the cytoplasm. It catalyses the reaction alpha-D-glucosamine 1-phosphate + acetyl-CoA = N-acetyl-alpha-D-glucosamine 1-phosphate + CoA + H(+). It carries out the reaction N-acetyl-alpha-D-glucosamine 1-phosphate + UTP + H(+) = UDP-N-acetyl-alpha-D-glucosamine + diphosphate. Its pathway is nucleotide-sugar biosynthesis; UDP-N-acetyl-alpha-D-glucosamine biosynthesis; N-acetyl-alpha-D-glucosamine 1-phosphate from alpha-D-glucosamine 6-phosphate (route II): step 2/2. It functions in the pathway nucleotide-sugar biosynthesis; UDP-N-acetyl-alpha-D-glucosamine biosynthesis; UDP-N-acetyl-alpha-D-glucosamine from N-acetyl-alpha-D-glucosamine 1-phosphate: step 1/1. The protein operates within bacterial outer membrane biogenesis; LPS lipid A biosynthesis. Functionally, catalyzes the last two sequential reactions in the de novo biosynthetic pathway for UDP-N-acetylglucosamine (UDP-GlcNAc). The C-terminal domain catalyzes the transfer of acetyl group from acetyl coenzyme A to glucosamine-1-phosphate (GlcN-1-P) to produce N-acetylglucosamine-1-phosphate (GlcNAc-1-P), which is converted into UDP-GlcNAc by the transfer of uridine 5-monophosphate (from uridine 5-triphosphate), a reaction catalyzed by the N-terminal domain. This is Bifunctional protein GlmU from Streptococcus suis (strain 98HAH33).